Consider the following 487-residue polypeptide: N-succinylglutamate 5-semialdehyde dehydrogenase (487 aa).

An NAD(+)-binding site is contributed by 221-226; the sequence is GSSDTG. Catalysis depends on residues Glu244 and Cys278.

This sequence belongs to the aldehyde dehydrogenase family. AstD subfamily.

The enzyme catalyses N-succinyl-L-glutamate 5-semialdehyde + NAD(+) + H2O = N-succinyl-L-glutamate + NADH + 2 H(+). It functions in the pathway amino-acid degradation; L-arginine degradation via AST pathway; L-glutamate and succinate from L-arginine: step 4/5. Functionally, catalyzes the NAD-dependent reduction of succinylglutamate semialdehyde into succinylglutamate. This Burkholderia cenocepacia (strain HI2424) protein is N-succinylglutamate 5-semialdehyde dehydrogenase.